Reading from the N-terminus, the 345-residue chain is N-acetyl-gamma-glutamyl-phosphate reductase (345 aa).

Cys151 is an active-site residue.

The protein belongs to the NAGSA dehydrogenase family. Type 1 subfamily.

It localises to the cytoplasm. It catalyses the reaction N-acetyl-L-glutamate 5-semialdehyde + phosphate + NADP(+) = N-acetyl-L-glutamyl 5-phosphate + NADPH + H(+). Its pathway is amino-acid biosynthesis; L-arginine biosynthesis; N(2)-acetyl-L-ornithine from L-glutamate: step 3/4. Catalyzes the NADPH-dependent reduction of N-acetyl-5-glutamyl phosphate to yield N-acetyl-L-glutamate 5-semialdehyde. This Clostridium novyi (strain NT) protein is N-acetyl-gamma-glutamyl-phosphate reductase.